The sequence spans 602 residues: Transcription termination factor Rho (602 aa).

Disordered regions lie at residues 1–35 and 76–216; these read MTDT…EPAG and ANGA…AEAE. Over residues 85-96 the composition is skewed to basic and acidic residues; that stretch reads SAQEHDKGDRPP. Positions 100–120 are enriched in polar residues; it reads APATQGEQTPTEQIDSQSQQV. Positions 172 to 182 are enriched in low complexity; sequence GDQQASGGQQA. A compositionally biased stretch (basic and acidic residues) spans 183 to 192; sequence RGDEDGEARQ. Positions 193 to 206 are enriched in basic residues; sequence GRRGRRFRDRRRRG. Residues 223–301 enclose the Rho RNA-BD domain; it reads VQPVAGILDV…VRLDSINGGS (79 aa). ATP is bound by residues 344 to 349, 356 to 361, and Arg387; these read GKGQRA and KAGKTT.

This sequence belongs to the Rho family. Homohexamer. The homohexamer assembles into an open ring structure.

In terms of biological role, facilitates transcription termination by a mechanism that involves Rho binding to the nascent RNA, activation of Rho's RNA-dependent ATPase activity, and release of the mRNA from the DNA template. In Mycobacterium bovis (strain ATCC BAA-935 / AF2122/97), this protein is Transcription termination factor Rho.